The primary structure comprises 372 residues: Lipoyl synthase, mitochondrial (372 aa).

Residues cysteine 106, cysteine 111, cysteine 117, cysteine 137, cysteine 141, cysteine 144, and serine 352 each coordinate [4Fe-4S] cluster. In terms of domain architecture, Radical SAM core spans 122 to 341 (EYGTATATIM…EKAGNELGFL (220 aa)).

It belongs to the radical SAM superfamily. Lipoyl synthase family. [4Fe-4S] cluster is required as a cofactor.

The protein resides in the mitochondrion. It carries out the reaction [[Fe-S] cluster scaffold protein carrying a second [4Fe-4S](2+) cluster] + N(6)-octanoyl-L-lysyl-[protein] + 2 oxidized [2Fe-2S]-[ferredoxin] + 2 S-adenosyl-L-methionine + 4 H(+) = [[Fe-S] cluster scaffold protein] + N(6)-[(R)-dihydrolipoyl]-L-lysyl-[protein] + 4 Fe(3+) + 2 hydrogen sulfide + 2 5'-deoxyadenosine + 2 L-methionine + 2 reduced [2Fe-2S]-[ferredoxin]. The protein operates within protein modification; protein lipoylation via endogenous pathway; protein N(6)-(lipoyl)lysine from octanoyl-[acyl-carrier-protein]: step 2/2. Functionally, catalyzes the radical-mediated insertion of two sulfur atoms into the C-6 and C-8 positions of the octanoyl moiety bound to the lipoyl domains of lipoate-dependent enzymes, thereby converting the octanoylated domains into lipoylated derivatives. The chain is Lipoyl synthase, mitochondrial (lias) from Xenopus laevis (African clawed frog).